We begin with the raw amino-acid sequence, 555 residues long: Potassium-transporting ATPase potassium-binding subunit (555 aa).

A run of 10 helical transmembrane segments spans residues 2–22 (IWVAVIITMLLFILVAKPTGI), 60–80 (QYALSLVLLNGFMIVVVYFIF), 130–150 (IGITFLMFAAPATTLALVMAF), 173–193 (VFLPIAFIAALVFVALGVPQT), 246–266 (MSNILQMMLMMLLPTALPFTY), 278–298 (ILFVSLFMVFLLGFITITTSE), 374–394 (AGFVNIIMYAIIAVFISGLMV), 412–432 (LIAVTILFHPLLILGFSALAL), 483–503 (LVMFLGRYFSLITMLAVAASL), and 525–545 (GIFIGTIVIVGALTFFPMLVL).

It belongs to the KdpA family. In terms of assembly, the system is composed of three essential subunits: KdpA, KdpB and KdpC.

The protein localises to the cell membrane. In terms of biological role, part of the high-affinity ATP-driven potassium transport (or Kdp) system, which catalyzes the hydrolysis of ATP coupled with the electrogenic transport of potassium into the cytoplasm. This subunit binds the extracellular potassium ions and delivers the ions to the membrane domain of KdpB through an intramembrane tunnel. The chain is Potassium-transporting ATPase potassium-binding subunit from Bacillus cereus (strain G9842).